A 237-amino-acid chain; its full sequence is Demethylmenaquinone methyltransferase (237 aa).

Residues T62, D80, 102–103, and S119 contribute to the S-adenosyl-L-methionine site; that span reads DA.

The protein belongs to the class I-like SAM-binding methyltransferase superfamily. MenG/UbiE family.

It catalyses the reaction a 2-demethylmenaquinol + S-adenosyl-L-methionine = a menaquinol + S-adenosyl-L-homocysteine + H(+). Its pathway is quinol/quinone metabolism; menaquinone biosynthesis; menaquinol from 1,4-dihydroxy-2-naphthoate: step 2/2. In terms of biological role, methyltransferase required for the conversion of demethylmenaquinol (DMKH2) to menaquinol (MKH2). This Renibacterium salmoninarum (strain ATCC 33209 / DSM 20767 / JCM 11484 / NBRC 15589 / NCIMB 2235) protein is Demethylmenaquinone methyltransferase.